A 296-amino-acid polypeptide reads, in one-letter code: Putative F-box protein At1g67623 (296 aa).

The 50-residue stretch at 21–70 folds into the F-box domain; it reads SLCLDSLPEDLLVEISSCTGASSLSAVRNLRLVSKSFRRICDEKYVFYRL.

The sequence is that of Putative F-box protein At1g67623 from Arabidopsis thaliana (Mouse-ear cress).